The sequence spans 453 residues: Formimidoylglutamate deiminase (453 aa).

Zn(2+)-binding residues include histidine 56 and histidine 58. N-formimidoyl-L-glutamate contacts are provided by glutamine 61, arginine 82, tyrosine 121, histidine 206, and arginine 209. Histidine 232 is a Zn(2+) binding site. Glutamate 235 provides a ligand contact to N-formimidoyl-L-glutamate. Active-site proton acceptor residues include histidine 269 and aspartate 320. Aspartate 320 is a binding site for Zn(2+).

This sequence belongs to the metallo-dependent hydrolases superfamily. As to quaternary structure, homodimer. Zn(2+) serves as cofactor.

It carries out the reaction N-formimidoyl-L-glutamate + H2O = N-formyl-L-glutamate + NH4(+). It participates in amino-acid degradation; L-histidine degradation into L-glutamate; L-glutamate from N-formimidoyl-L-glutamate (deiminase route): step 1/2. With respect to regulation, inhibited by the metal chelator dipicolinate. Inhibited by N-formimino-L-aspartate and N-guanidino-L-glutaric acid. In terms of biological role, catalyzes the hydrolysis of N-formimino-L-glutamate to N-formyl-L-glutamate and ammonia. This chain is Formimidoylglutamate deiminase, found in Pseudomonas aeruginosa (strain ATCC 15692 / DSM 22644 / CIP 104116 / JCM 14847 / LMG 12228 / 1C / PRS 101 / PAO1).